The following is a 262-amino-acid chain: 14-3-3 protein I (262 aa).

This sequence belongs to the 14-3-3 family. As to quaternary structure, homodimer. Forms a complex composed of CDPK1, PKA regulatory subunit PKAr and 14-3-3I; the complex is formed in merozoites in response to low extracellular level of K(+) and may play a role in microneme secretion. Interacts with CDPK1 (when phosphorylated) in a Ca(2+)-independent manner; the interaction does not regulate CDPK1 catalytic activity but is required for merozoite invasion of host erythrocytes. Interacts with PKA regulatory subunit PKAr (when phosphorylated) in a Ca(2+)-dependent manner. Interacts with histone H3 (when phosphorylated at 'Ser-28' or when phosphorylated at 'Ser-28' and 'Ser-32').

Its subcellular location is the cell membrane. It localises to the cytoplasm. It is found in the nucleus. Its function is as follows. Adapter protein which binds to its partners, usually via a phosphoserine or phosphothreonine motif. Binding generally results in the modulation of the activity and/or cellular localization of the binding partner. Via its interaction with CDPK1 and PKAr, involved in merozoite microneme secretion and thus in merozoite invasion of host erythrocytes. The polypeptide is 14-3-3 protein I (Plasmodium falciparum (isolate 3D7)).